A 276-amino-acid polypeptide reads, in one-letter code: Shikimate dehydrogenase (NADP(+)) (276 aa).

Shikimate-binding positions include 20–22 (SRS) and T67. Residue K71 is the Proton acceptor of the active site. D83 serves as a coordination point for NADP(+). Residues N92 and D107 each coordinate shikimate. NADP(+)-binding positions include 131–135 (GAGGA) and I217. Residue Y219 participates in shikimate binding. G240 is an NADP(+) binding site.

It belongs to the shikimate dehydrogenase family. Homodimer.

The catalysed reaction is shikimate + NADP(+) = 3-dehydroshikimate + NADPH + H(+). It participates in metabolic intermediate biosynthesis; chorismate biosynthesis; chorismate from D-erythrose 4-phosphate and phosphoenolpyruvate: step 4/7. Involved in the biosynthesis of the chorismate, which leads to the biosynthesis of aromatic amino acids. Catalyzes the reversible NADPH linked reduction of 3-dehydroshikimate (DHSA) to yield shikimate (SA). The protein is Shikimate dehydrogenase (NADP(+)) of Acidiphilium cryptum (strain JF-5).